Reading from the N-terminus, the 526-residue chain is O-phosphoserine--tRNA(Cys) ligase (526 aa).

Substrate contacts are provided by residues 189–191 (HMT), 234–236 (SAS), 276–277 (YY), and Asn319.

Belongs to the class-II aminoacyl-tRNA synthetase family. O-phosphoseryl-tRNA(Cys) synthetase subfamily. Homotetramer. Interacts with SepCysS.

The catalysed reaction is tRNA(Cys) + O-phospho-L-serine + ATP = O-phospho-L-seryl-tRNA(Cys) + AMP + diphosphate. Its function is as follows. Catalyzes the attachment of O-phosphoserine (Sep) to tRNA(Cys). The protein is O-phosphoserine--tRNA(Cys) ligase of Methanocorpusculum labreanum (strain ATCC 43576 / DSM 4855 / Z).